Consider the following 329-residue polypeptide: Quinone-oxidoreductase QR1, chloroplastic (329 aa).

The protein belongs to the zinc-containing alcohol dehydrogenase family. Quinone oxidoreductase subfamily.

The protein localises to the plastid. It localises to the chloroplast outer membrane. It catalyses the reaction 2 a quinone + NADPH + H(+) = 2 a 1,4-benzosemiquinone + NADP(+). With respect to regulation, inhibited by dicumarol. Functionally, NADPH-dependent single-electron reducing quinone reductase. Involved in haustorium initiation in parasitic plants through redox cycling of exogenous haustorium-inducing factors. Can use 9,10-phenanthrenequinone (PAQ), 1,2-naphthoquinone, 5-hydroxy-1,4-naphthoquinone (juglone) and 2,6-dimethoxy-p-benzoquinone (DMBQ) as substrates, but has no activity with menadione, diamide, 2,3-dimethoxy-5-methyl-1,4-benzoquinone or 1,4-naphthoquinone. The protein is Quinone-oxidoreductase QR1, chloroplastic of Triphysaria versicolor (Yellow owl's clover).